The sequence spans 299 residues: Probable lipid kinase YegS (299 aa).

Residues 2–133 (AEFPASLLIL…IDMAQVNKQT (132 aa)) form the DAGKc domain. Residues Thr40, 66 to 72 (GDGTINE), and Thr95 contribute to the ATP site. Residues Leu215, Asp218, and Leu220 each contribute to the Mg(2+) site. The Proton acceptor role is filled by Glu271.

It belongs to the diacylglycerol/lipid kinase family. YegS lipid kinase subfamily. The cofactor is Mg(2+). It depends on Ca(2+) as a cofactor.

It localises to the cytoplasm. Functionally, probably phosphorylates lipids; the in vivo substrate is unknown. The polypeptide is Probable lipid kinase YegS (Escherichia coli (strain 55989 / EAEC)).